Reading from the N-terminus, the 99-residue chain is Large ribosomal subunit protein uL23 (99 aa).

It belongs to the universal ribosomal protein uL23 family. As to quaternary structure, part of the 50S ribosomal subunit. Contacts protein L29, and trigger factor when it is bound to the ribosome.

Functionally, one of the early assembly proteins it binds 23S rRNA. One of the proteins that surrounds the polypeptide exit tunnel on the outside of the ribosome. Forms the main docking site for trigger factor binding to the ribosome. The protein is Large ribosomal subunit protein uL23 of Saccharopolyspora erythraea (strain ATCC 11635 / DSM 40517 / JCM 4748 / NBRC 13426 / NCIMB 8594 / NRRL 2338).